We begin with the raw amino-acid sequence, 411 residues long: Protein PHLOEM PROTEIN 2-LIKE A5 (411 aa).

Residues 20–157 (TGPQVFINFR…KWTEALFSVC (138 aa)) form the TIR domain. The active site involves glutamate 94.

It catalyses the reaction NAD(+) + H2O = ADP-D-ribose + nicotinamide + H(+). This chain is Protein PHLOEM PROTEIN 2-LIKE A5 (PP2A5), found in Arabidopsis thaliana (Mouse-ear cress).